The sequence spans 785 residues: Endonuclease MutS2 (785 aa).

332 to 339 (GPNTGGKT) contacts ATP. Residues 710–785 (IDLRGLDAEE…GDGATIVELK (76 aa)) form the Smr domain.

This sequence belongs to the DNA mismatch repair MutS family. MutS2 subfamily. As to quaternary structure, homodimer. Binds to stalled ribosomes, contacting rRNA.

Its function is as follows. Endonuclease that is involved in the suppression of homologous recombination and thus may have a key role in the control of bacterial genetic diversity. In terms of biological role, acts as a ribosome collision sensor, splitting the ribosome into its 2 subunits. Detects stalled/collided 70S ribosomes which it binds and splits by an ATP-hydrolysis driven conformational change. Acts upstream of the ribosome quality control system (RQC), a ribosome-associated complex that mediates the extraction of incompletely synthesized nascent chains from stalled ribosomes and their subsequent degradation. Probably generates substrates for RQC. The protein is Endonuclease MutS2 of Clostridium botulinum (strain Eklund 17B / Type B).